The following is a 596-amino-acid chain: MSGLTSVREAEDLWQKIQLRRCKREQERLKHPDVELRDGDFRLRGLVAGERVLEWEFIENETGTCTLQLSLSHYLAKWVMDHRGRAKRNVIINIEKQGARWTGMMDHYRVIKTDAGDAYIEIVFLHDFEQTKHIRVWCNPFLRPELQFPKVWIIFGPAKWCLLVTLFVNLLRLETSLWTLPDDPTDINEWMGPSFNPANWRNIVKPFPFLADNSPVTMVFSRFGTFYDTAKKILEDHQLTLTCRRYIKDRDPHPFEDLKGLWGIDPVEDLLQKIPLRDGCVVWDIEDNSGWGTQTAFGGSWLTGFVRGMVQLAGDGQVEGVDVFTGDYTFPGEYYSPWFMGTSPIAPHVVFEEGPLTGIKSSEFSYYEATDTSFLAGGQSAPGINEGISALVNIGGDLLTSFINSQLAALGAVGGAIDLPPLGGLLDAVLQPLYSDVFGAFMEVPTLRAMGISLPISGLEDIVTGLGDFHYFENMADGAMKAFTLSAFAAIASQIHKTRARTTHTLKVSDAAPYIFAPKPYGHCWIGDRVGTSVLGYPVEHQLFVERIRKVKYRIDKDGMKPLEIEIGYREPKNPALHILEEIKRVNGALGTAGIL.

The polypeptide is Minor tail protein Gp28 (28) (Mycobacterium phage L5 (Mycobacteriophage L5)).